Consider the following 407-residue polypeptide: Endo-1,4-beta-xylanase D (407 aa).

Positions 1-19 are cleaved as a signal peptide; that stretch reads MTLVKSILLALAAGHVAQA. Residues 20-333 enclose the GH10 domain; sequence QLNTAAKAAG…KPAYYGILAG (314 aa). Residue N118 is glycosylated (N-linked (GlcNAc...) asparagine). E148 (proton donor) is an active-site residue. E255 functions as the Nucleophile in the catalytic mechanism. C283 and C289 are oxidised to a cystine. Residues 337-364 are disordered; that stretch reads GSGSSSSTSSTTLITTTTPTASSSTTSA. A CBM1 domain is found at 371-407; it reads SGAAHWGQCGGIGWSGPTICVSPYTCQVLNPYYSQCL.

This sequence belongs to the glycosyl hydrolase 10 (cellulase F) family.

The protein localises to the secreted. The catalysed reaction is Endohydrolysis of (1-&gt;4)-beta-D-xylosidic linkages in xylans.. It functions in the pathway glycan degradation; xylan degradation. Inhibited by wheat xylanase inhibiting protein I (XIP-I). Functionally, endo-1,4-beta-xylanase involved in the hydrolysis of xylan, a major structural heterogeneous polysaccharide found in plant biomass representing the second most abundant polysaccharide in the biosphere, after cellulose. Shows an endo-mode of action on xylan forming mainly xylobiose and short-chain xylooligosaccharides (XOS). This is Endo-1,4-beta-xylanase D (xynD) from Talaromyces funiculosus (Fruitlet core rot fungus).